An 82-amino-acid chain; its full sequence is Small ribosomal subunit protein bS16 (82 aa).

Belongs to the bacterial ribosomal protein bS16 family.

This is Small ribosomal subunit protein bS16 from Klebsiella pneumoniae subsp. pneumoniae (strain ATCC 700721 / MGH 78578).